Here is a 153-residue protein sequence, read N- to C-terminus: Transcriptional repressor NrdR (153 aa).

A disordered region spans residues 1 to 20 (MKCPFCNSADTRVKNSRHSD). A zinc finger lies at 3 to 34 (CPFCNSADTRVKNSRHSDDNMSVRRRRLCEVC). Residues 11 to 20 (TRVKNSRHSD) are compositionally biased toward basic and acidic residues. Positions 49–139 (IMVLKKDGRM…VYMDFSDADD (91 aa)) constitute an ATP-cone domain.

The protein belongs to the NrdR family. It depends on Zn(2+) as a cofactor.

Negatively regulates transcription of bacterial ribonucleotide reductase nrd genes and operons by binding to NrdR-boxes. In Anaplasma phagocytophilum (strain HZ), this protein is Transcriptional repressor NrdR.